Reading from the N-terminus, the 298-residue chain is Oligodendrocyte transcription factor 2 (298 aa).

Positions 1 to 13 (MDSDASLVSSRPS) are enriched in polar residues. Disordered regions lie at residues 1-60 (MDSD…SAEL) and 79-102 (SSSSSASSASSASSKKDKKQMTEP). Residues 26–41 (NKGGGGGGGGGGGFTG) show a composition bias toward gly residues. The segment covering 79–91 (SSSSSASSASSAS) has biased composition (low complexity). The bHLH domain maps to 106–160 (QLRLKINSRERKRMHDLNIAMDGLREVMPYAHGPSVRKLSKIATLLLARNYILML).

It is found in the nucleus. In terms of biological role, required for oligodendrocyte and motor neuron specification in the spinal cord. The chain is Oligodendrocyte transcription factor 2 (OLIG2) from Gallus gallus (Chicken).